A 135-amino-acid polypeptide reads, in one-letter code: Fluoride-specific ion channel FluC 1 (135 aa).

4 consecutive transmembrane segments (helical) span residues 7 to 27, 32 to 52, 65 to 85, and 96 to 116; these read LAVG…GLVL, GFPY…PFLM, LALA…SFSV, and WSAF…LSLL. Na(+) is bound by residues Gly75 and Thr78.

Belongs to the fluoride channel Fluc/FEX (TC 1.A.43) family.

It localises to the cell membrane. The enzyme catalyses fluoride(in) = fluoride(out). Its activity is regulated as follows. Na(+) is not transported, but it plays an essential structural role and its presence is essential for fluoride channel function. Its function is as follows. Fluoride-specific ion channel. Important for reducing fluoride concentration in the cell, thus reducing its toxicity. The chain is Fluoride-specific ion channel FluC 1 from Latilactobacillus sakei subsp. sakei (strain 23K) (Lactobacillus sakei subsp. sakei).